The sequence spans 297 residues: Thiosulfate sulfurtransferase (297 aa).

Lys-14 bears the N6-acetyllysine; alternate mark. Residue Lys-14 is modified to N6-succinyllysine; alternate. The region spanning 25-143 (LGPGLRVLDA…WLKEGHPVTS (119 aa)) is the Rhodanese 1 domain. O-linked (GlcNAc) serine glycosylation occurs at Ser-35. The residue at position 38 (Ser-38) is a Phosphoserine. An N6-acetyllysine; alternate modification is found at Lys-136. The residue at position 136 (Lys-136) is an N6-succinyllysine; alternate. The hinge stretch occupies residues 144–159 (EPSRPEPAVFKATLDR). Lys-163 carries the post-translational modification N6-acetyllysine. The Rhodanese 2 domain occupies 173-288 (QSKRFQLVDS…WFHQAPPETR (116 aa)). N6-acetyllysine; alternate is present on Lys-175. Residue Lys-175 is modified to N6-succinyllysine; alternate. Residue Arg-187 participates in substrate binding. An N6-acetyllysine; alternate modification is found at Lys-224. N6-succinyllysine; alternate is present on Lys-224. Lys-236 carries the post-translational modification N6-acetyllysine. Residue Lys-237 is modified to N6-acetyllysine; alternate. Lys-237 is modified (N6-succinyllysine; alternate). The Cysteine persulfide intermediate role is filled by Cys-248. Residue Lys-250 coordinates substrate.

As to quaternary structure, monomer.

It localises to the mitochondrion matrix. It catalyses the reaction thiosulfate + hydrogen cyanide = thiocyanate + sulfite + 2 H(+). Functionally, together with MRPL18, acts as a mitochondrial import factor for the cytosolic 5S rRNA. Only the nascent unfolded cytoplasmic form is able to bind to the 5S rRNA. Formation of iron-sulfur complexes and cyanide detoxification. Binds molecular oxygen and sulfur. In Cricetulus griseus (Chinese hamster), this protein is Thiosulfate sulfurtransferase (TST).